The chain runs to 115 residues: Tyrosine-protein phosphatase 21 (115 aa).

In terms of domain architecture, Tyrosine-protein phosphatase spans 1–115 (WLMIVEKECR…EIGGDAPMVV (115 aa)). Residue D83 coordinates substrate.

Belongs to the protein-tyrosine phosphatase family.

It catalyses the reaction O-phospho-L-tyrosyl-[protein] + H2O = L-tyrosyl-[protein] + phosphate. This is Tyrosine-protein phosphatase 21 (STY-21) from Styela plicata (Wrinkled sea squirt).